A 297-amino-acid polypeptide reads, in one-letter code: MVHQVLYRALVSTKWLAESIRSGKVGPSLRVLDASWYSPGTRQARKEYQERHVPGASFFDIEECRDTTSPYEMMLPSEAHFGDYVGNLGISNDTHVVVYDGDDLGSFYAPRVWWMFRVFGHRTVSVLNGGFRNWLKEGHPVTSEPSRPEPAVFKATLNRSLLKTYEQVLENLQSKRFQLVDSRAQGRYLGTQPEPDAVGLDSGHIRGSVNVPFMNFLTEDGFEKSPEELRAIFQDKKVDLSQPLIATCRKGVTACHIALAAYLCGKPDVAVYDGSWSEWFRRAPPETRVSQGKSGKA.

Lysine 14 is modified (N6-acetyllysine; alternate). N6-succinyllysine; alternate is present on lysine 14. The Rhodanese 1 domain occupies 25-143; sequence VGPSLRVLDA…WLKEGHPVTS (119 aa). A glycan (O-linked (GlcNAc) serine) is linked at serine 35. At serine 38 the chain carries Phosphoserine. The residue at position 136 (lysine 136) is an N6-acetyllysine; alternate. Lysine 136 carries the post-translational modification N6-succinyllysine; alternate. The hinge stretch occupies residues 144–159; it reads EPSRPEPAVFKATLNR. Residue lysine 163 is modified to N6-acetyllysine. Residues 173–288 form the Rhodanese 2 domain; that stretch reads QSKRFQLVDS…WFRRAPPETR (116 aa). At lysine 175 the chain carries N6-acetyllysine; alternate. N6-succinyllysine; alternate is present on lysine 175. Position 187 (arginine 187) interacts with substrate. Lysine 224 carries the N6-acetyllysine; alternate modification. Lysine 224 bears the N6-succinyllysine; alternate mark. Lysine 236 carries the N6-acetyllysine modification. Lysine 237 carries the N6-acetyllysine; alternate modification. Lysine 237 carries the N6-succinyllysine; alternate modification. Catalysis depends on cysteine 248, which acts as the Cysteine persulfide intermediate. Lysine 250 contributes to the substrate binding site.

In terms of assembly, monomer. Expressed in numerous tissues.

The protein localises to the mitochondrion matrix. It carries out the reaction thiosulfate + hydrogen cyanide = thiocyanate + sulfite + 2 H(+). Its function is as follows. Together with MRPL18, acts as a mitochondrial import factor for the cytosolic 5S rRNA. Only the nascent unfolded cytoplasmic form is able to bind to the 5S rRNA. Involved in the formation of iron-sulfur complexes, cyanide detoxification or modification of sulfur-containing enzymes. Other thiol compounds, besides cyanide, can act as sulfur ion acceptors. Also has weak mercaptopyruvate sulfurtransferase (MST) activity. This is Thiosulfate sulfurtransferase (Tst) from Rattus norvegicus (Rat).